The sequence spans 172 residues: MEALLGYLLIFVARLTDVSMATIRMIMVVKGKRVIAACIGFVEVSIYVVAIGKVLSGMDNPLNVLAYASGFATGNYVGIFLEEKMALGNIIAQVISDYEVEKLVEKLRNVGFGVTVIEGYGREGIRYILNVSLQRKHLSRLYQTVEEHDKKAFVTVTDARAIRGGYFAGMKK.

3 helical membrane-spanning segments follow: residues 3-23 (ALLGYLLIFVARLTDVSMATI), 34-54 (VIAACIGFVEVSIYVVAIGKV), and 61-81 (PLNVLAYASGFATGNYVGIFL).

The protein belongs to the UPF0316 family.

The protein localises to the cell membrane. In Alkaliphilus oremlandii (strain OhILAs) (Clostridium oremlandii (strain OhILAs)), this protein is UPF0316 protein Clos_0555.